We begin with the raw amino-acid sequence, 354 residues long: Uroporphyrinogen decarboxylase (354 aa).

Substrate-binding positions include 25–29 (RQAGR), Asp75, Tyr152, Thr207, and His330.

It belongs to the uroporphyrinogen decarboxylase family. As to quaternary structure, homodimer.

It localises to the cytoplasm. It catalyses the reaction uroporphyrinogen III + 4 H(+) = coproporphyrinogen III + 4 CO2. It participates in porphyrin-containing compound metabolism; protoporphyrin-IX biosynthesis; coproporphyrinogen-III from 5-aminolevulinate: step 4/4. Its function is as follows. Catalyzes the decarboxylation of four acetate groups of uroporphyrinogen-III to yield coproporphyrinogen-III. In Xanthomonas oryzae pv. oryzae (strain PXO99A), this protein is Uroporphyrinogen decarboxylase.